We begin with the raw amino-acid sequence, 141 residues long: Large ribosomal subunit protein uL11 (141 aa).

Belongs to the universal ribosomal protein uL11 family. As to quaternary structure, part of the ribosomal stalk of the 50S ribosomal subunit. Interacts with L10 and the large rRNA to form the base of the stalk. L10 forms an elongated spine to which L12 dimers bind in a sequential fashion forming a multimeric L10(L12)X complex. One or more lysine residues are methylated.

Its function is as follows. Forms part of the ribosomal stalk which helps the ribosome interact with GTP-bound translation factors. The polypeptide is Large ribosomal subunit protein uL11 (Prochlorococcus marinus (strain MIT 9211)).